The sequence spans 114 residues: U5-lycotoxin-Ls1a (114 aa).

Residues 1–20 (MKYQILFGVVFLTLLSYCYS) form the signal peptide. Residues 21 to 45 (EIEDEFENFVDEEMVEADDPFSLAR) constitute a propeptide that is removed on maturation. 3 disulfide bridges follow: C51–C66, C65–C93, and C77–C91.

The protein belongs to the neurotoxin 19 (CSTX) family. 04 (U1-Lctx) subfamily. As to expression, expressed by the venom gland.

Its subcellular location is the secreted. The protein is U5-lycotoxin-Ls1a of Lycosa singoriensis (Wolf spider).